A 389-amino-acid polypeptide reads, in one-letter code: Inner membrane transport protein YdhP (389 aa).

Over M1–P6 the chain is Cytoplasmic. The helical transmembrane segment at L7–L27 threads the bilayer. Residues L28 to G43 are Periplasmic-facing. Residues M44–L64 form a helical membrane-spanning segment. The Cytoplasmic portion of the chain corresponds to S65–R70. The helical transmembrane segment at S71 to P91 threads the bilayer. The Periplasmic portion of the chain corresponds to D92 to R100. A helical transmembrane segment spans residues I101 to V121. Over V122 to A130 the chain is Cytoplasmic. Residues V131–W151 form a helical membrane-spanning segment. The Periplasmic portion of the chain corresponds to L152–R159. Residues M160–L180 form a helical membrane-spanning segment. At P181–V203 the chain is on the cytoplasmic side. Residues L204–I224 form a helical membrane-spanning segment. The Periplasmic segment spans residues S225–P236. Residues V237–G257 form a helical membrane-spanning segment. At G258–N266 the chain is on the cytoplasmic side. The helical transmembrane segment at G267–A287 threads the bilayer. Over R288–E290 the chain is Periplasmic. A helical transmembrane segment spans residues F291–L311. Topologically, residues Q312 to N330 are cytoplasmic. The chain crosses the membrane as a helical span at residues I331–A351. Topologically, residues G352–S356 are periplasmic. A helical transmembrane segment spans residues F357–A377. Residues R378 to S389 are Cytoplasmic-facing.

Belongs to the major facilitator superfamily.

The protein localises to the cell inner membrane. The sequence is that of Inner membrane transport protein YdhP (ydhP) from Escherichia coli (strain K12).